Consider the following 210-residue polypeptide: Large ribosomal subunit protein uL3 (210 aa).

The interval 133-156 is disordered; the sequence is ASHGNSLSHRVPGSIGQNQTPGKV. Gln151 bears the N5-methylglutamine mark.

It belongs to the universal ribosomal protein uL3 family. Part of the 50S ribosomal subunit. Forms a cluster with proteins L14 and L19. Methylated by PrmB.

Its function is as follows. One of the primary rRNA binding proteins, it binds directly near the 3'-end of the 23S rRNA, where it nucleates assembly of the 50S subunit. This Hamiltonella defensa subsp. Acyrthosiphon pisum (strain 5AT) protein is Large ribosomal subunit protein uL3.